The primary structure comprises 448 residues: D-inositol 3-phosphate glycosyltransferase (448 aa).

The tract at residues 1-21 (MAEQHTGVGRQRGARPWPRPR) is disordered. H29 provides a ligand contact to 1D-myo-inositol 3-phosphate. UDP-N-acetyl-alpha-D-glucosamine contacts are provided by residues 35 to 36 (QP) and G43. 1D-myo-inositol 3-phosphate-binding positions include 40–45 (DAGGMN), K98, Y131, T155, and R175. Residues R255, K260, and Q321 each contribute to the UDP-N-acetyl-alpha-D-glucosamine site. Residues Y330, R331, and A333 each coordinate Mg(2+). Residues E343 and E351 each coordinate UDP-N-acetyl-alpha-D-glucosamine. T357 lines the Mg(2+) pocket.

This sequence belongs to the glycosyltransferase group 1 family. MshA subfamily. As to quaternary structure, homodimer.

The enzyme catalyses 1D-myo-inositol 3-phosphate + UDP-N-acetyl-alpha-D-glucosamine = 1D-myo-inositol 2-acetamido-2-deoxy-alpha-D-glucopyranoside 3-phosphate + UDP + H(+). Functionally, catalyzes the transfer of a N-acetyl-glucosamine moiety to 1D-myo-inositol 3-phosphate to produce 1D-myo-inositol 2-acetamido-2-deoxy-glucopyranoside 3-phosphate in the mycothiol biosynthesis pathway. In Salinispora arenicola (strain CNS-205), this protein is D-inositol 3-phosphate glycosyltransferase.